Here is a 938-residue protein sequence, read N- to C-terminus: Isoleucine--tRNA ligase (938 aa).

The 'HIGH' region signature appears at 58-68 (PYANGSIHIGH). Glutamate 561 lines the L-isoleucyl-5'-AMP pocket. The 'KMSKS' region motif lies at 602–606 (KMSKS). Lysine 605 contributes to the ATP binding site. 4 residues coordinate Zn(2+): cysteine 901, cysteine 904, cysteine 921, and cysteine 924.

It belongs to the class-I aminoacyl-tRNA synthetase family. IleS type 1 subfamily. In terms of assembly, monomer. Zn(2+) is required as a cofactor.

It localises to the cytoplasm. It catalyses the reaction tRNA(Ile) + L-isoleucine + ATP = L-isoleucyl-tRNA(Ile) + AMP + diphosphate. Its function is as follows. Catalyzes the attachment of isoleucine to tRNA(Ile). As IleRS can inadvertently accommodate and process structurally similar amino acids such as valine, to avoid such errors it has two additional distinct tRNA(Ile)-dependent editing activities. One activity is designated as 'pretransfer' editing and involves the hydrolysis of activated Val-AMP. The other activity is designated 'posttransfer' editing and involves deacylation of mischarged Val-tRNA(Ile). The polypeptide is Isoleucine--tRNA ligase (Citrobacter koseri (strain ATCC BAA-895 / CDC 4225-83 / SGSC4696)).